Consider the following 613-residue polypeptide: Pentatricopeptide repeat-containing protein At2g02750 (613 aa).

15 PPR repeats span residues 30–64 (NKFTFPPLLKSCAKLGDVVQGRILHAQVVKTGFFV), 65–99 (DVFTATALVSMYMKVKQVTDALKVLDEMPERGIAS), 101–126 (NAAVSGLLENGFCRDAFRMFGDARVS), 128–162 (SGMNSVTVASVLGGCGDIEGGMQLHCLAMKSGFEM), 163–193 (EVYVGTSLVSMYSRCGEWVLAARMFEKVPHK), 194–228 (SVVTYNAFISGLMENGVMNLVPSVFNLMRKFSSEE), 230–264 (NDVTFVNAITACASLLNLQYGRQLHGLVMKKEFQF), 265–295 (ETMVGTALIDMYSKCRCWKSAYIVFTELKDT), 297–331 (NLISWNSVISGMMINGQHETAVELFEKLDSEGLKP), 332–366 (DSATWNSLISGFSQLGKVIEAFKFFERMLSVVMVP), 367–401 (SLKCLTSLLSACSDIWTLKNGKEIHGHVIKAAAER), 402–432 (DIFVLTSLIDMYMKCGLSSWARRIFDRFEPK), 435–469 (DPVFWNVMISGYGKHGECESAIEIFELLREEKVEP), 470–500 (SLATFTAVLSACSHCGNVEKGSQIFRLMQEE), and 506–539 (STEHIGCMIDLLGRSGRLREAKEVIDQMSEPSSS). Residues 540–613 (VYSSLLGSCR…VKLPGLSLSG (74 aa)) form a type E motif; degenerate region.

The protein belongs to the PPR family. PCMP-E subfamily.

In Arabidopsis thaliana (Mouse-ear cress), this protein is Pentatricopeptide repeat-containing protein At2g02750 (PCMP-E22).